A 39-amino-acid chain; its full sequence is Photosystem II reaction center protein J (39 aa).

A helical transmembrane segment spans residues 7–27 (IPLWIVATVAGTGALVVVGLF).

It belongs to the PsbJ family. As to quaternary structure, PSII is composed of 1 copy each of membrane proteins PsbA, PsbB, PsbC, PsbD, PsbE, PsbF, PsbH, PsbI, PsbJ, PsbK, PsbL, PsbM, PsbT, PsbX, PsbY, PsbZ, Psb30/Ycf12, peripheral proteins PsbO, CyanoQ (PsbQ), PsbU, PsbV and a large number of cofactors. It forms dimeric complexes.

Its subcellular location is the cellular thylakoid membrane. Its function is as follows. One of the components of the core complex of photosystem II (PSII). PSII is a light-driven water:plastoquinone oxidoreductase that uses light energy to abstract electrons from H(2)O, generating O(2) and a proton gradient subsequently used for ATP formation. It consists of a core antenna complex that captures photons, and an electron transfer chain that converts photonic excitation into a charge separation. The sequence is that of Photosystem II reaction center protein J from Synechococcus sp. (strain ATCC 27144 / PCC 6301 / SAUG 1402/1) (Anacystis nidulans).